Reading from the N-terminus, the 150-residue chain is Major facilitator superfamily domain-containing 14C pseudogene (150 aa).

The segment at 1–25 (MSVEPPPELEEKAASEPEAGAMPEK) is disordered. The Extracellular portion of the chain corresponds to 1-49 (MSVEPPPELEEKAASEPEAGAMPEKRAGAQAAGSTWLQGFGPPSVYHAA). A helical membrane pass occupies residues 50 to 70 (IVIFLEFFAWGLLTTPMLTVL). Residues 71–82 (HETFSQHTFLMN) are Cytoplasmic-facing. A helical transmembrane segment spans residues 83 to 103 (GLIQGVKGLLSFLSAPLIGAL). Topologically, residues 104 to 111 (SDVWGRKP) are extracellular. Residues 112–132 (FLLGTVFFTCFPIPLMRISPC) traverse the membrane as a helical segment. Residues 133-150 (RVWWRAPVVPATCGRRMA) are Cytoplasmic-facing.

The protein belongs to the major facilitator superfamily.

It is found in the membrane. This chain is Major facilitator superfamily domain-containing 14C pseudogene, found in Homo sapiens (Human).